Consider the following 256-residue polypeptide: Probable enoyl-CoA hydratase echA14 (256 aa).

Positions 235 to 256 are disordered; sequence GPQAKSVQSPEFAARLAAAQHR.

The protein belongs to the enoyl-CoA hydratase/isomerase family.

The catalysed reaction is a (3S)-3-hydroxyacyl-CoA = a (2E)-enoyl-CoA + H2O. It catalyses the reaction a 4-saturated-(3S)-3-hydroxyacyl-CoA = a (3E)-enoyl-CoA + H2O. Could possibly oxidize fatty acids using specific components. This is Probable enoyl-CoA hydratase echA14 (echA14) from Mycobacterium tuberculosis (strain CDC 1551 / Oshkosh).